Reading from the N-terminus, the 349-residue chain is tRNA pseudouridine synthase D (349 aa).

Phe27 lines the substrate pocket. The active-site Nucleophile is the Asp80. Residue Asn129 participates in substrate binding. Residues 155-303 (GVPNYFGAQR…VEAARRAMLL (149 aa)) form the TRUD domain. Residue Phe329 participates in substrate binding.

This sequence belongs to the pseudouridine synthase TruD family.

It carries out the reaction uridine(13) in tRNA = pseudouridine(13) in tRNA. In terms of biological role, responsible for synthesis of pseudouridine from uracil-13 in transfer RNAs. The polypeptide is tRNA pseudouridine synthase D (Escherichia coli O6:K15:H31 (strain 536 / UPEC)).